The primary structure comprises 298 residues: Bifunctional protein FolD (298 aa).

NADP(+) contacts are provided by residues 165 to 167, serine 190, and isoleucine 231; that span reads GRS.

It belongs to the tetrahydrofolate dehydrogenase/cyclohydrolase family. As to quaternary structure, homodimer.

The catalysed reaction is (6R)-5,10-methylene-5,6,7,8-tetrahydrofolate + NADP(+) = (6R)-5,10-methenyltetrahydrofolate + NADPH. It catalyses the reaction (6R)-5,10-methenyltetrahydrofolate + H2O = (6R)-10-formyltetrahydrofolate + H(+). It participates in one-carbon metabolism; tetrahydrofolate interconversion. Its function is as follows. Catalyzes the oxidation of 5,10-methylenetetrahydrofolate to 5,10-methenyltetrahydrofolate and then the hydrolysis of 5,10-methenyltetrahydrofolate to 10-formyltetrahydrofolate. This chain is Bifunctional protein FolD, found in Prochlorococcus marinus (strain MIT 9301).